Here is a 510-residue protein sequence, read N- to C-terminus: 2,3-bisphosphoglycerate-independent phosphoglycerate mutase (510 aa).

Positions 13 and 63 each coordinate Mn(2+). The Phosphoserine intermediate role is filled by Ser-63. Substrate-binding positions include His-124, Arg-154–Asp-155, Arg-186, Arg-192, Arg-262–Arg-265, and Lys-334. Residues Asp-401, His-405, Asp-442, His-443, and His-461 each coordinate Mn(2+).

It belongs to the BPG-independent phosphoglycerate mutase family. In terms of assembly, monomer. The cofactor is Mn(2+).

It carries out the reaction (2R)-2-phosphoglycerate = (2R)-3-phosphoglycerate. It participates in carbohydrate degradation; glycolysis; pyruvate from D-glyceraldehyde 3-phosphate: step 3/5. Catalyzes the interconversion of 2-phosphoglycerate and 3-phosphoglycerate. This Aliivibrio fischeri (strain ATCC 700601 / ES114) (Vibrio fischeri) protein is 2,3-bisphosphoglycerate-independent phosphoglycerate mutase.